A 443-amino-acid polypeptide reads, in one-letter code: ATP synthase subunit b-delta (443 aa).

The segment at 1–168 (MSTFIGQLIG…PSDAALDDAV (168 aa)) is ATP synthase subunit b. Residues 4 to 24 (FIGQLIGFAVIVFLLVRFVVP) form a helical membrane-spanning segment. An ATP synthase subunit delta region spans residues 169 to 443 (GSRMRSTSRE…LASAETQLPD (275 aa)).

It in the N-terminal section; belongs to the ATPase B chain family. In the C-terminal section; belongs to the ATPase delta chain family. F-type ATPases have 2 components, F(1) - the catalytic core - and F(0) - the membrane proton channel. F(1) has five subunits: alpha(3), beta(3), gamma(1), delta(1), epsilon(1). F(0) has three main subunits: a(1), b(2) and c(10-14). The alpha and beta chains form an alternating ring which encloses part of the gamma chain. F(1) is attached to F(0) by a central stalk formed by the gamma and epsilon chains, while a peripheral stalk is formed by the delta and b chains.

Its subcellular location is the cell membrane. In terms of biological role, f(1)F(0) ATP synthase produces ATP from ADP in the presence of a proton or sodium gradient. F-type ATPases consist of two structural domains, F(1) containing the extramembraneous catalytic core and F(0) containing the membrane proton channel, linked together by a central stalk and a peripheral stalk. During catalysis, ATP synthesis in the catalytic domain of F(1) is coupled via a rotary mechanism of the central stalk subunits to proton translocation. Functionally, this fusion protein includes a component of the F(0) channel (subunit b) and of the F(1) subunit (subunit delta). Two copies of subunit b and one of delta together form the peripheral 'stator' stalk which links F(1) to F(0). In Mycobacterium sp. (strain JLS), this protein is ATP synthase subunit b-delta (atpFH).